A 248-amino-acid polypeptide reads, in one-letter code: Pulmonary surfactant-associated protein A (248 aa).

Residues 1–20 (MSLGSLAFTLFLTVVAGIKC) form the signal peptide. A glycan (N-linked (GlcNAc...) asparagine) is linked at N21. Residues 28 to 100 (GSPGIPGTPG…PGERGLPGFP (73 aa)) enclose the Collagen-like domain. The interval 28 to 100 (GSPGIPGTPG…PGERGLPGFP (73 aa)) is disordered. 4-hydroxyproline is present on residues P30, P33, P36, P42, P54, P57, P63, P67, P70, and P76. Basic and acidic residues predominate over residues 42-51 (PGRDGRDGIK). Over residues 54–65 (PGPPGPMGPPGG) the composition is skewed to pro residues. Over residues 69-82 (LPGRDGLPGAPGAP) the composition is skewed to low complexity. The segment covering 84–93 (EHGDKGEPGE) has biased composition (basic and acidic residues). Residues 132–248 (LSVGDKVFST…LQYRLAICEF (117 aa)) form the C-type lectin domain. 2 cysteine pairs are disulfide-bonded: C155-C246 and C224-C238. N-linked (GlcNAc...) asparagine glycosylation occurs at N207. The Ca(2+) site is built by E215, R217, N234, and D235.

Belongs to the SFTPA family. Oligomeric complex of 6 set of homotrimers.

It is found in the secreted. The protein resides in the extracellular space. Its subcellular location is the extracellular matrix. It localises to the surface film. Its function is as follows. In presence of calcium ions, it binds to surfactant phospholipids and contributes to lower the surface tension at the air-liquid interface in the alveoli of the mammalian lung and is essential for normal respiration. Enhances the expression of MYO18A/SP-R210 on alveolar macrophages. The protein is Pulmonary surfactant-associated protein A (Sftpa1) of Mus musculus (Mouse).